A 362-amino-acid polypeptide reads, in one-letter code: Aminomethyltransferase (362 aa).

The protein belongs to the GcvT family. In terms of assembly, the glycine cleavage system is composed of four proteins: P, T, L and H.

It carries out the reaction N(6)-[(R)-S(8)-aminomethyldihydrolipoyl]-L-lysyl-[protein] + (6S)-5,6,7,8-tetrahydrofolate = N(6)-[(R)-dihydrolipoyl]-L-lysyl-[protein] + (6R)-5,10-methylene-5,6,7,8-tetrahydrofolate + NH4(+). The glycine cleavage system catalyzes the degradation of glycine. The chain is Aminomethyltransferase from Listeria monocytogenes serotype 4b (strain CLIP80459).